A 93-amino-acid polypeptide reads, in one-letter code: Small ribosomal subunit protein uS19 (93 aa).

The protein belongs to the universal ribosomal protein uS19 family.

Protein S19 forms a complex with S13 that binds strongly to the 16S ribosomal RNA. This chain is Small ribosomal subunit protein uS19, found in Mycobacteroides abscessus (strain ATCC 19977 / DSM 44196 / CCUG 20993 / CIP 104536 / JCM 13569 / NCTC 13031 / TMC 1543 / L948) (Mycobacterium abscessus).